The primary structure comprises 425 residues: Glutamate-1-semialdehyde 2,1-aminomutase (425 aa).

An N6-(pyridoxal phosphate)lysine modification is found at Lys265.

Belongs to the class-III pyridoxal-phosphate-dependent aminotransferase family. HemL subfamily. Homodimer. Pyridoxal 5'-phosphate is required as a cofactor.

It is found in the cytoplasm. The catalysed reaction is (S)-4-amino-5-oxopentanoate = 5-aminolevulinate. The protein operates within porphyrin-containing compound metabolism; protoporphyrin-IX biosynthesis; 5-aminolevulinate from L-glutamyl-tRNA(Glu): step 2/2. The protein is Glutamate-1-semialdehyde 2,1-aminomutase of Clostridium perfringens (strain SM101 / Type A).